A 182-amino-acid chain; its full sequence is Succinate dehydrogenase cytochrome b560 subunit, mitochondrial (182 aa).

The chain crosses the membrane as a helical span at residues 65–94 (LTWMLSGFHRISGCVMAGTLLVGGIGFAVL). The Mitochondrial intermembrane segment spans residues 95–114 (PFDFTAFVDFIRSWNLPCAV). The chain crosses the membrane as a helical span at residues 115–139 (TAVFKYIIAFPIIFHTLNGIRFLGF). Position 129 (histidine 129) interacts with heme. At 140–147 (DLAKGVNN) the chain is on the mitochondrial matrix side. A helical transmembrane segment spans residues 148-169 (VGQIYKSGYLVSGLSAILALAI). Residues 170 to 172 (VFN) are Mitochondrial intermembrane-facing.

The protein belongs to the cytochrome b560 family. In terms of assembly, component of complex II composed of four subunits: a flavoprotein (FP), iron-sulfur protein (IP), and a cytochrome b560 composed of two integral membrane proteins. Heme serves as cofactor.

The protein localises to the mitochondrion inner membrane. It participates in carbohydrate metabolism; tricarboxylic acid cycle. Its function is as follows. Membrane-anchoring subunit of succinate dehydrogenase (SDH) that is involved in complex II of the mitochondrial electron transport chain and is responsible for transferring electrons from succinate to ubiquinone (coenzyme Q). Mediates resistance to enteropathogenic E.coli infection. In Caenorhabditis elegans, this protein is Succinate dehydrogenase cytochrome b560 subunit, mitochondrial (mev-1).